Here is an 801-residue protein sequence, read N- to C-terminus: MSSLSQSPPPPEMDIQPPALVNDDPSTYSSALWDWGDLLDFAADERLLVDQIHFPPVLSPPLPPLIPTQTPAESELDPSPEESGSGSDRVRKRDPRLICSNFIEGMLPCSCPELDQKLEDAELPKKKRVRGGSGVARCQVPDCEADISELKGYHKRHRVCLRCATASFVVLDGENKRYCQQCGKFHLLPDFDEGKRSCRRKLERHNNRRKRKPVDKGGVAAEQQQVLSQNDNSVIDVEDGKDITCSSDQRAEEEPSLIFEDRHITTQGSVPFTRSINADNFVSVTGSGEAQPDEGMNDTKFERSPSNGDNKSAYSTVCPTGRISFKLYDWNPAEFPRRLRHQIFQWLANMPVELEGYIRPGCTILTVFIAMPEIMWAKLSKDPVAYLDEFILKPGKMLFGRGSMTVYLNNMIFRLIKGGTTLKRVDVKLESPKLQFVYPTCFEAGKPIELVVCGQNLLQPKCRFLVSFSGKYLPHNYSVVPAPDQDGKRSCNNKFYKINIVNSDPSLFGPAFVEVENESGLSNFIPLIIGDAAVCSEMKLIEQKFNATLFPEGQEVTACSSLTCCCRDFGERQSTFSGLLLDIAWSVKVPSAERTEQPVNRCQIKRYNRVLNYLIQNNSASILGNVLHNLETLVKKMEPDSLVHCTCDCDVRLLHENMDLASDIHRKHQSPIESKVNPPSSGCCCVSSQKDIPSRILNFNKDPEAGLDCKERIQADCSPDSGGKETDPLLNKEVVMNVNDIGDWPRKSCIKTHSALAFRSRQTMFLIATFAVCFAVCAVLYHPNKVTQLAVAIRMRLVHKI.

2 disordered regions span residues 1–23 (MSSL…LVND) and 59–91 (SPPL…DRVR). The SBP-type; atypical zinc-finger motif lies at 135 to 212 (VARCQVPDCE…ERHNNRRKRK (78 aa)). Zn(2+)-binding residues include cysteine 138, cysteine 143, cysteine 160, cysteine 163, cysteine 179, cysteine 182, histidine 186, and cysteine 198. Positions 195 to 211 (KRSCRRKLERHNNRRKR) match the Bipartite nuclear localization signal motif. Residues 203 to 213 (ERHNNRRKRKP) are compositionally biased toward basic residues. Disordered stretches follow at residues 203 to 258 (ERHN…PSLI) and 286 to 313 (GSGE…NKSA). The segment covering 222–233 (EQQQVLSQNDNS) has biased composition (polar residues). Positions 249-258 (QRAEEEPSLI) are enriched in basic and acidic residues. The segment covering 304 to 313 (SPSNGDNKSA) has biased composition (polar residues).

As to quaternary structure, homodimer. Interacts with KIN17. Interacts with HY5. Zn(2+) serves as cofactor. In terms of tissue distribution, expressed in roots rosette leaves, cauline leaves, stems, flowers and siliques.

The protein resides in the nucleus speckle. Its function is as follows. Transcription factor that participates in reprogramming global gene expression during copper deficiency in order to improve the metal uptake and prioritize its distribution to copper proteins of major importance. Binds directly to 5'-GTAC-3' motifs in the microRNA (miRNA) promoter of the stress-responsive miRNAs miR398b and miR398c to activate their transcription. During copper deficiency, activates the copper transporters COPT1 and COPT2, and the copper chaperone CCH, directly or indirectly via miRNAs. Required for the expression of the miRNAs miR397, miR408 and miR857. Acts coordinately with HY5 to regulate miR408 and its target genes in response to changes in light and copper conditions. Activates miR857 and its target genes in response to low copper conditions. Involved in cadmium stress response by regulating miR397a, miR398b, miR398c and miR857. Required for iron homeostasis during copper deficiency. The polypeptide is Squamosa promoter-binding-like protein 7 (SPL7) (Arabidopsis thaliana (Mouse-ear cress)).